The following is a 456-amino-acid chain: 1,3-beta-glucanosyltransferase gas4 (456 aa).

A signal peptide spans 1 to 25 (MGVANIIYALFLLGPSIFLKATAQT). C68 and C97 are oxidised to a cystine. Y86, N156, E157, D197, and R202 together coordinate (1,3-beta-D-glucosyl)n. The active-site Proton donor is E157. Cystine bridges form between C211-C350 and C229-C260. N248 carries N-linked (GlcNAc...) asparagine glycosylation. The active-site Nucleophile is E257. (1,3-beta-D-glucosyl)n is bound at residue Y296. Disordered regions lie at residues 334 to 353 (NPKG…CPAN) and 384 to 434 (IEGP…ESGS). 2 N-linked (GlcNAc...) asparagine glycosylation sites follow: N353 and N415. Positions 417-434 (TSTTSYTSGMTSSSESGS) are enriched in low complexity. A lipid anchor (GPI-anchor amidated serine) is attached at S432. Residues 433–456 (GSSKIGVAFCQALFITVLIATLSF) constitute a propeptide, removed in mature form.

Belongs to the glycosyl hydrolase 72 family.

It is found in the cell membrane. Functionally, splits internally a 1,3-beta-glucan molecule and transfers the newly generated reducing end (the donor) to the non-reducing end of another 1,3-beta-glucan molecule (the acceptor) forming a 1,3-beta linkage, resulting in the elongation of 1,3-beta-glucan chains in the cell wall. Involved in spore wall assembly. The chain is 1,3-beta-glucanosyltransferase gas4 (gas4) from Schizosaccharomyces pombe (strain 972 / ATCC 24843) (Fission yeast).